We begin with the raw amino-acid sequence, 359 residues long: MSKPPSDPPRRPPAAFAYEDEASEPRNSGRQQQGRRKPESFSENIVVTPDEDDPFINPDSDLIAPPVATPRKRRTSFGKIAAGAFGILLSLGLGLWTDRLIRDLFTRADWLGYAALGVLAIGILAVLALVIRETAGMMRLAAVQTIKAEAEAAILETRPAKARAVLARLTTLLAANPETSKGRATLKATEGEVIDPPHLMALAERELLAPLDRKARALIVNASKRVSIVTAVSPRAVVDLLYVLYEAVRLIRAMAELYGGRPGTLGMFRLLRDVLAHLAVTGSIAVGDSLVQQVLGHGLASKLSARLGEGVINGLMTARIGIAAMDLCRPLAFRTLKRPGIGDFIADLTPSMSPRGNNP.

Residues 1–50 (MSKPPSDPPRRPPAAFAYEDEASEPRNSGRQQQGRRKPESFSENIVVTPD) are disordered. Helical transmembrane passes span 77–97 (FGKI…GLWT) and 111–131 (LGYA…ALVI).

The protein belongs to the UPF0283 family.

The protein localises to the cell inner membrane. The sequence is that of UPF0283 membrane protein RHECIAT_CH0002430 from Rhizobium etli (strain CIAT 652).